A 117-amino-acid polypeptide reads, in one-letter code: Protein Aeq5-like2 (117 aa).

The Cytoplasmic segment spans residues 1–36; sequence MLVNARAIRQSIGIVVAQCRRDLESNRTLDYRTRMR. Residues 37–56 traverse the membrane as a helical segment; it reads TSLILVAMVMVSVLLPYTYG. Residues 57–117 are Extracellular-facing; the sequence is SSCDSFCTEQ…RFTKEPTEES (61 aa). Cystine bridges form between C59–C94, C63–C90, C70–C83, and C74–C80.

The mature peptide may be cleaved at a dibasic residue site and be shorter than the sequence shown (possibly residues 1-94). In terms of tissue distribution, expressed in endodermal ganglion neurons, apparently bipolar and following mesentery folds (observed in both planulae and primary polyps). It not expressed in nematocytes.

It localises to the membrane. This is Protein Aeq5-like2 from Nematostella vectensis (Starlet sea anemone).